A 242-amino-acid chain; its full sequence is Small ribosomal subunit protein uS7m (242 aa).

The N-terminal 37 residues, M1–Y37, are a transit peptide targeting the mitochondrion. At K228 the chain carries N6-acetyllysine.

This sequence belongs to the universal ribosomal protein uS7 family. Component of the mitochondrial ribosome small subunit (28S) which comprises a 12S rRNA and about 30 distinct proteins.

The protein localises to the mitochondrion. The protein is Small ribosomal subunit protein uS7m (MRPS7) of Bos taurus (Bovine).